The sequence spans 189 residues: Ribosome hibernation promotion factor (189 aa).

Belongs to the HPF/YfiA ribosome-associated protein family. Long HPF subfamily. In terms of assembly, interacts with 100S ribosomes. Not associated with 70S ribosome monomers, about 1 monomer per ribosome.

It is found in the cytoplasm. Required for dimerization of active 70S ribosomes into 100S ribosomes in stationary phase; 100S ribosomes are translationally inactive and sometimes present during exponential growth. May not be the only factor implicated. Might negatively regulate the activity of the sigma-54 factor (SigL). This Bacillus subtilis (strain 168) protein is Ribosome hibernation promotion factor (yvyD).